Consider the following 61-residue polypeptide: Small ribosomal subunit protein uS14 (61 aa).

Residues C24, C27, C40, and C43 each coordinate Zn(2+).

This sequence belongs to the universal ribosomal protein uS14 family. Zinc-binding uS14 subfamily. Part of the 30S ribosomal subunit. Contacts proteins S3 and S10. Zn(2+) is required as a cofactor.

In terms of biological role, binds 16S rRNA, required for the assembly of 30S particles and may also be responsible for determining the conformation of the 16S rRNA at the A site. The protein is Small ribosomal subunit protein uS14 of Helicobacter pylori (strain G27).